The sequence spans 185 residues: Meiotically up-regulated gene 5 protein (185 aa).

It localises to the cytoplasm. Functionally, required for correct meiotic chromosome segregation. The polypeptide is Meiotically up-regulated gene 5 protein (mug5) (Schizosaccharomyces pombe (strain 972 / ATCC 24843) (Fission yeast)).